Reading from the N-terminus, the 305-residue chain is Sulfate adenylyltransferase subunit 2 (305 aa).

It belongs to the PAPS reductase family. CysD subfamily. As to quaternary structure, heterodimer composed of CysD, the smaller subunit, and CysN.

It catalyses the reaction sulfate + ATP + H(+) = adenosine 5'-phosphosulfate + diphosphate. It participates in sulfur metabolism; hydrogen sulfide biosynthesis; sulfite from sulfate: step 1/3. With CysN forms the ATP sulfurylase (ATPS) that catalyzes the adenylation of sulfate producing adenosine 5'-phosphosulfate (APS) and diphosphate, the first enzymatic step in sulfur assimilation pathway. APS synthesis involves the formation of a high-energy phosphoric-sulfuric acid anhydride bond driven by GTP hydrolysis by CysN coupled to ATP hydrolysis by CysD. The sequence is that of Sulfate adenylyltransferase subunit 2 from Ectopseudomonas mendocina (strain ymp) (Pseudomonas mendocina).